The primary structure comprises 116 residues: MKSLGRHVIVELWGCQNIDSLQAVEEAIRDAVAATNATLRDLQVFPWEPYNGVSGIAILSESHLSIHTWPELGYAAVDVFTCGEHTNPEAAIPVLRERFRPQRMEVMQVSRGMIVD.

Serine 62 (schiff-base intermediate with substrate; via pyruvic acid) is an active-site residue. Serine 62 is modified (pyruvic acid (Ser); by autocatalysis). Histidine 67 (proton acceptor; for processing activity) is an active-site residue. Cysteine 82 acts as the Proton donor; for catalytic activity in catalysis.

It belongs to the prokaryotic AdoMetDC family. Type 1 subfamily. In terms of assembly, heterotetramer of two alpha and two beta chains arranged as a dimer of alpha/beta heterodimers. Pyruvate is required as a cofactor. In terms of processing, is synthesized initially as an inactive proenzyme. Formation of the active enzyme involves a self-maturation process in which the active site pyruvoyl group is generated from an internal serine residue via an autocatalytic post-translational modification. Two non-identical subunits are generated from the proenzyme in this reaction, and the pyruvate is formed at the N-terminus of the alpha chain, which is derived from the carboxyl end of the proenzyme. The post-translation cleavage follows an unusual pathway, termed non-hydrolytic serinolysis, in which the side chain hydroxyl group of the serine supplies its oxygen atom to form the C-terminus of the beta chain, while the remainder of the serine residue undergoes an oxidative deamination to produce ammonia and the pyruvoyl group blocking the N-terminus of the alpha chain.

The catalysed reaction is S-adenosyl-L-methionine + H(+) = S-adenosyl 3-(methylsulfanyl)propylamine + CO2. It functions in the pathway amine and polyamine biosynthesis; S-adenosylmethioninamine biosynthesis; S-adenosylmethioninamine from S-adenosyl-L-methionine: step 1/1. Catalyzes the decarboxylation of S-adenosylmethionine to S-adenosylmethioninamine (dcAdoMet), the propylamine donor required for the synthesis of the polyamines spermine and spermidine from the diamine putrescine. In Thermomicrobium roseum (strain ATCC 27502 / DSM 5159 / P-2), this protein is S-adenosylmethionine decarboxylase proenzyme.